We begin with the raw amino-acid sequence, 301 residues long: Isonocardicin synthase (301 aa).

Monomer.

The enzyme catalyses nocardicin G + S-adenosyl-L-methionine = isonocardicin C + S-methyl-5'-thioadenosine + H(+). It carries out the reaction nocardicin E + S-adenosyl-L-methionine = isonocardicin A + S-methyl-5'-thioadenosine + H(+). Its pathway is antibiotic biosynthesis. Its function is as follows. Involved in the biosynthesis of the beta-lactam antibiotic nocardicin A. In the presence of S-adenosyl-L-methionine (AdoMet), catalyzes the transfer of a 3-amino-3-carboxypropyl group from AdoMet to nocardicin G, forming isonocardicin C. Can also catalyze the transformation of nocardicin E and F to isonocardicin A and B, respectively, but in vivo substrate is probably nocardicin G. The sequence is that of Isonocardicin synthase from Nocardia uniformis subsp. tsuyamanensis.